An 804-amino-acid polypeptide reads, in one-letter code: Phenylalanine--tRNA ligase beta subunit (804 aa).

In terms of domain architecture, tRNA-binding spans 40–155 (DRGMKGVVIG…SDAPIGADAI (116 aa)). Residues 409 to 484 (QDSVVVTVTL…RLYGYDRLPA (76 aa)) form the B5 domain. 4 residues coordinate Mg(2+): Asp462, Asp468, Glu471, and Glu472. The region spanning 710–803 (PRFPSVVRDI…VEKQFGAVLR (94 aa)) is the FDX-ACB domain.

The protein belongs to the phenylalanyl-tRNA synthetase beta subunit family. Type 1 subfamily. Tetramer of two alpha and two beta subunits. The cofactor is Mg(2+).

Its subcellular location is the cytoplasm. It catalyses the reaction tRNA(Phe) + L-phenylalanine + ATP = L-phenylalanyl-tRNA(Phe) + AMP + diphosphate + H(+). This is Phenylalanine--tRNA ligase beta subunit from Geobacillus kaustophilus (strain HTA426).